The sequence spans 590 residues: MRTHYSSDINEKLQGQKVTVCGWVHRRRDHGGVIFLDIRDRTGLVQLVFNPDNDNFKVADSLRSEFVIKAEGVVNLRPEGQENKNISSGKVEIIGDSIEVINKSKTIPFQLDDFQSTGEDVKLKYRYIDLRRPEMQHKLITRSKAIRYVRNFLDNNGFLDIETPFLTKATPEGARDYLVPSRNFNGKFYALPQSPQLFKQLLMVSGFDRYYQIVKCFRDEDLRADRQPEFTQIDIEASFIDEAFIMSTMERMIAGLFKETIGVEFATPFQVMTFADAIDKYGSDKPDLRIPLEFVNIKEDMQNEEFKVFSGPANDPQSRVIALRIPGGNDKLTRKMIDEYTKFVGIYGAKGLAYIKINSLSQGKEGLQSPIVKNISEETLFKVIEKTSAKEGDLLFFGAGKAKIVNDSMGALRAKIGEDLDLFNKDWAPLWVVDFPMFEKDDNRLYAMHHPFTAPKVSSVEDLVNTNPEELSSRAYDMVINGYEVGGGSIRIHKQDIQAKVFNLLGISDDEAREKFGFMLDALSYGTPIHGGIAFGVDRLIMLLTGTTNIRDVIAFPKTQTASCLMTEAPSTVSLEQLNELGIAVKKEER.

Residue glutamate 172 coordinates L-aspartate. The segment at glutamine 196 to lysine 199 is aspartate. Arginine 218 provides a ligand contact to L-aspartate. ATP-binding positions include arginine 218–glutamate 220 and glutamine 227. Histidine 449 is an L-aspartate binding site. Glutamate 484 lines the ATP pocket. Residue arginine 491 participates in L-aspartate binding. Glycine 536 to arginine 539 contacts ATP.

The protein belongs to the class-II aminoacyl-tRNA synthetase family. Type 1 subfamily. In terms of assembly, homodimer.

The protein resides in the cytoplasm. The enzyme catalyses tRNA(Asx) + L-aspartate + ATP = L-aspartyl-tRNA(Asx) + AMP + diphosphate. Aspartyl-tRNA synthetase with relaxed tRNA specificity since it is able to aspartylate not only its cognate tRNA(Asp) but also tRNA(Asn). Reaction proceeds in two steps: L-aspartate is first activated by ATP to form Asp-AMP and then transferred to the acceptor end of tRNA(Asp/Asn). The protein is Aspartate--tRNA(Asp/Asn) ligase of Francisella tularensis subsp. tularensis (strain WY96-3418).